Here is a 193-residue protein sequence, read N- to C-terminus: Peptidyl-tRNA hydrolase (193 aa).

Position 15 (tyrosine 15) interacts with tRNA. Histidine 20 functions as the Proton acceptor in the catalytic mechanism. TRNA contacts are provided by phenylalanine 65, asparagine 67, and asparagine 113.

It belongs to the PTH family. As to quaternary structure, monomer.

Its subcellular location is the cytoplasm. It carries out the reaction an N-acyl-L-alpha-aminoacyl-tRNA + H2O = an N-acyl-L-amino acid + a tRNA + H(+). In terms of biological role, hydrolyzes ribosome-free peptidyl-tRNAs (with 1 or more amino acids incorporated), which drop off the ribosome during protein synthesis, or as a result of ribosome stalling. Catalyzes the release of premature peptidyl moieties from peptidyl-tRNA molecules trapped in stalled 50S ribosomal subunits, and thus maintains levels of free tRNAs and 50S ribosomes. The chain is Peptidyl-tRNA hydrolase from Ehrlichia ruminantium (strain Gardel).